Reading from the N-terminus, the 66-residue chain is Small ribosomal subunit protein bS21 (66 aa).

The protein belongs to the bacterial ribosomal protein bS21 family.

This Rickettsia africae (strain ESF-5) protein is Small ribosomal subunit protein bS21.